A 581-amino-acid polypeptide reads, in one-letter code: Peptidyl-prolyl cis-trans isomerase FKBP10 (581 aa).

Positions 1 to 33 are cleaved as a signal peptide; that stretch reads MFLVGSSSHTLHRLRILPLLLLLQTLERGLGRA. PPIase FKBP-type domains follow at residues 61-149, 173-261, and 285-373; these read GDFV…LDVW, SDFV…LDVH, and GDFM…IDFH. N-linked (GlcNAc...) asparagine glycans are attached at residues Asn-69, Asn-181, Asn-293, Asn-309, Asn-351, Asn-392, and Asn-406. The 88-residue stretch at 398 to 485 folds into the PPIase FKBP-type 4 domain; it reads GDFIRYHYNC…LFEVELVSRE (88 aa). EF-hand domains lie at 496-531 and 541-576; these read WYQDPSTSLFEDMDLNKDGEVPPEEFSSFIKAQVNE and DPDKTISDMFQNQDRNQDGKITAEELKLKSDEDQER. Positions 509, 511, 513, 515, 520, 554, 556, 558, 560, and 565 each coordinate Ca(2+). A disordered region spans residues 533–581; it reads KGRLMPGQDPDKTISDMFQNQDRNQDGKITAEELKLKSDEDQERVHEEL. A compositionally biased stretch (basic and acidic residues) spans 555–581; that stretch reads RNQDGKITAEELKLKSDEDQERVHEEL. A Prevents secretion from ER motif is present at residues 578-581; sequence HEEL.

In terms of processing, N-glycosylated. Post-translationally, phosphorylated. Expressed in aorta, brain, heart, kidney, lung, spleen and testis. Not detected in liver.

It localises to the endoplasmic reticulum lumen. It catalyses the reaction [protein]-peptidylproline (omega=180) = [protein]-peptidylproline (omega=0). Inhibited by both FK506 and rapamycin, but not by cyclosporin A. In terms of biological role, PPIases accelerate the folding of proteins during protein synthesis. This Mus musculus (Mouse) protein is Peptidyl-prolyl cis-trans isomerase FKBP10 (Fkbp10).